The following is a 25-amino-acid chain: Chrysophsin-2 (25 aa).

Position 25 is a histidine amide (His25).

In terms of tissue distribution, gill.

Its subcellular location is the secreted. In terms of biological role, has antibacterial activity against Gram-positive bacteria B.subtilis ATCC 6633, L.garvieae ATCC 49156 and S.iniae F-8502, and Gram-negative bacteria E.coli WT-2, V.anguillarum ATCC 19264, V.penaeicida KHA, V.harveyi ATCC 14126, V.vulnificus ATCC 33148 and A.salmonicida NCMB 1102. Has hemolytic activity against human red blood cells. Seems to disrupt the membranes by adopting an alpha helical conformation. May play a significant role in innate host defense. In Pagrus major (Red sea bream), this protein is Chrysophsin-2.